Consider the following 146-residue polypeptide: Large ribosomal subunit protein uL15 (146 aa).

The tract at residues 1-51 is disordered; the sequence is MKLHELKPAKGSRKVRNRVGRGTSSGNGKTSGRGQKGQKARSGGGVRLGFE. The segment covering 10 to 19 has biased composition (basic residues); that stretch reads KGSRKVRNRV. Gly residues-rich tracts occupy residues 23 to 35 and 42 to 51; these read TSSG…GRGQ and SGGGVRLGFE.

This sequence belongs to the universal ribosomal protein uL15 family. In terms of assembly, part of the 50S ribosomal subunit.

In terms of biological role, binds to the 23S rRNA. The sequence is that of Large ribosomal subunit protein uL15 from Streptococcus equi subsp. equi (strain 4047).